Consider the following 265-residue polypeptide: Undecaprenyl-diphosphatase (265 aa).

7 helical membrane passes run 38 to 58 (RSDF…CLAL), 75 to 95 (RDYV…GLIV), 108 to 128 (PVAW…HFAG), 135 to 155 (VVTW…GVFP), 181 to 201 (FVFM…LLEM), 215 to 235 (VAVA…WLLG), and 244 to 264 (VFAV…PAAA).

Belongs to the UppP family.

Its subcellular location is the cell inner membrane. It carries out the reaction di-trans,octa-cis-undecaprenyl diphosphate + H2O = di-trans,octa-cis-undecaprenyl phosphate + phosphate + H(+). Catalyzes the dephosphorylation of undecaprenyl diphosphate (UPP). Confers resistance to bacitracin. This chain is Undecaprenyl-diphosphatase, found in Xanthomonas euvesicatoria pv. vesicatoria (strain 85-10) (Xanthomonas campestris pv. vesicatoria).